Consider the following 132-residue polypeptide: Secreted RxLR effector protein BLR08 (132 aa).

The N-terminal stretch at 1–22 (MRHKCLLAMAVVASMAFYSVIS) is a signal peptide. N-linked (GlcNAc...) asparagine glycosylation is present at Asn-25. The interval 36–57 (NRRLRPRVEPTANELDKQSDVD) is disordered. The RxLR-dEER signature appears at 37–83 (RRLRPRVEPTANELDKQSDVDTKLEADRRLGYPGESGFMLEGELEER). The helical transmembrane segment at 111–131 (FFLGLFASVIGVSIISACYGI) threads the bilayer.

The protein belongs to the RxLR effector family. As to quaternary structure, interacts with host transcription factor NAC069.

It is found in the secreted. The protein localises to the host endoplasmic reticulum membrane. Functionally, secreted effector that inhibits stress-induced relocalization of the transcription factor NAC069 to the nucleus, thus affecting its broad role in abiotic and biotic stress responses. The sequence is that of Secreted RxLR effector protein BLR08 from Bremia lactucae (Lettuce downy mildew).